We begin with the raw amino-acid sequence, 771 residues long: Myotubularin-related protein 10 (771 aa).

Positions 217–657 (FETYSDWDRE…THIKLWKLCY (441 aa)) constitute a Myotubularin phosphatase domain. A phosphoserine mark is found at serine 603 and serine 745.

Belongs to the protein-tyrosine phosphatase family. Non-receptor class myotubularin subfamily.

The chain is Myotubularin-related protein 10 (Mtmr10) from Mus musculus (Mouse).